The primary structure comprises 211 residues: tRNA (pseudouridine(54)-N(1))-methyltransferase (211 aa).

S-adenosyl-L-methionine is bound by residues L128, G150, and C183.

It belongs to the methyltransferase superfamily. TrmY family. In terms of assembly, homodimer.

It localises to the cytoplasm. It catalyses the reaction pseudouridine(54) in tRNA + S-adenosyl-L-methionine = N(1)-methylpseudouridine(54) in tRNA + S-adenosyl-L-homocysteine + H(+). Specifically catalyzes the N1-methylation of pseudouridine at position 54 (Psi54) in tRNAs. The chain is tRNA (pseudouridine(54)-N(1))-methyltransferase from Methanosarcina acetivorans (strain ATCC 35395 / DSM 2834 / JCM 12185 / C2A).